The sequence spans 621 residues: Frizzled and smoothened-like protein H (621 aa).

An N-terminal signal peptide occupies residues 1–21; the sequence is MNLKFYNLIFFISFLICCIHG. Topologically, residues 22 to 246 are extracellular; sequence QRYLPVEGGK…VWNQIFKIND (225 aa). Residues 27-166 enclose the FZ domain; that stretch reads VEGGKCEKYI…IEWVKYNLTI (140 aa). 2 disulfides stabilise this stretch: Cys-32–Cys-103 and Cys-46–Cys-96. N-linked (GlcNAc...) asparagine glycosylation is found at Asn-60, Asn-107, Asn-163, Asn-176, and Asn-206. Residues 247-267 traverse the membrane as a helical segment; sequence VLSSISLACTLILLFTFGILN. Residues 268 to 277 lie on the Cytoplasmic side of the membrane; the sequence is PKLNRFDKKN. Residues 278–298 traverse the membrane as a helical segment; sequence LFFIAGVFGMSVSGVLIAANG. Topologically, residues 299-318 are extracellular; the sequence is SEKTVCPTPERYAVNTDRVC. A helical membrane pass occupies residues 319–339; the sequence is VASGFLVHFSALFAILWWTIG. The Cytoplasmic segment spans residues 340-359; it reads LADVYYGIKFVGKKIKIKVR. Residues 360–380 traverse the membrane as a helical segment; it reads YYLLATLTISLAFTLVPLGTG. The Extracellular segment spans residues 381 to 400; it reads QYQAGLSNVMCFLKDEIYQS. A helical membrane pass occupies residues 401–421; sequence MTFFVPLGICLTMGTILMILV. Topologically, residues 422–464 are cytoplasmic; it reads MREIYVIVKSNSTSSSFSSSSSKSKSKSKSSDSISYLKLQVKP. Residues 465 to 485 traverse the membrane as a helical segment; it reads MLNIILFYFTFLYLFLFVRVI. At 486 to 520 the chain is on the extracellular side; it reads NSRYQEYEDSAIPYMLCLAKGGGDSCRLKGPSAGS. The helical transmembrane segment at 521 to 541 threads the bilayer; sequence LGYFAYCLRIYGIYLFIISFL. At 542-621 the chain is on the cytoplasmic side; the sequence is SSRTIKIWKE…RNYNTDDDDL (80 aa). Low complexity predominate over residues 575 to 594; sequence FSSSKNTSTTQNSTLNNTES. A disordered region spans residues 575–603; sequence FSSSKNTSTTQNSTLNNTESDTSKRGNSS.

Belongs to the G-protein coupled receptor Fz/Smo family.

Its subcellular location is the membrane. This chain is Frizzled and smoothened-like protein H (fslH), found in Dictyostelium discoideum (Social amoeba).